The chain runs to 387 residues: S-adenosylmethionine synthase (387 aa).

H19 is a binding site for ATP. D21 is a binding site for Mg(2+). E47 is a K(+) binding site. Q103 contacts L-methionine. The segment at 103–113 is flexible loop; that stretch reads QSPDIAQGVEL. Residues 167 to 169, 233 to 234, D242, 248 to 249, A265, and K269 contribute to the ATP site; these read DMK, RF, and RK. D242 contributes to the L-methionine binding site. K273 is a binding site for L-methionine.

It belongs to the AdoMet synthase family. In terms of assembly, homotetramer; dimer of dimers. Mg(2+) is required as a cofactor. The cofactor is K(+).

The protein resides in the cytoplasm. The catalysed reaction is L-methionine + ATP + H2O = S-adenosyl-L-methionine + phosphate + diphosphate. It functions in the pathway amino-acid biosynthesis; S-adenosyl-L-methionine biosynthesis; S-adenosyl-L-methionine from L-methionine: step 1/1. Its function is as follows. Catalyzes the formation of S-adenosylmethionine (AdoMet) from methionine and ATP. The overall synthetic reaction is composed of two sequential steps, AdoMet formation and the subsequent tripolyphosphate hydrolysis which occurs prior to release of AdoMet from the enzyme. The chain is S-adenosylmethionine synthase from Mycoplasma capricolum subsp. capricolum (strain California kid / ATCC 27343 / NCTC 10154).